Reading from the N-terminus, the 283-residue chain is Thymidylate synthase (283 aa).

Arg-22 lines the dUMP pocket. Cys-160 (nucleophile) is an active-site residue. Residues 180–183 (RSCD), Asn-191, and 221–223 (HIY) each bind dUMP. Position 183 (Asp-183) interacts with (6R)-5,10-methylene-5,6,7,8-tetrahydrofolate. A (6R)-5,10-methylene-5,6,7,8-tetrahydrofolate-binding site is contributed by Ser-282.

This sequence belongs to the thymidylate synthase family. Bacterial-type ThyA subfamily. In terms of assembly, homodimer.

The protein localises to the cytoplasm. The enzyme catalyses dUMP + (6R)-5,10-methylene-5,6,7,8-tetrahydrofolate = 7,8-dihydrofolate + dTMP. It functions in the pathway pyrimidine metabolism; dTTP biosynthesis. Functionally, catalyzes the reductive methylation of 2'-deoxyuridine-5'-monophosphate (dUMP) to 2'-deoxythymidine-5'-monophosphate (dTMP) while utilizing 5,10-methylenetetrahydrofolate (mTHF) as the methyl donor and reductant in the reaction, yielding dihydrofolate (DHF) as a by-product. This enzymatic reaction provides an intracellular de novo source of dTMP, an essential precursor for DNA biosynthesis. The polypeptide is Thymidylate synthase (Aliivibrio fischeri (strain ATCC 700601 / ES114) (Vibrio fischeri)).